We begin with the raw amino-acid sequence, 320 residues long: ATP-dependent 6-phosphofructokinase (320 aa).

Gly12 provides a ligand contact to ATP. 22 to 26 is an ADP binding site; sequence RGVVR. ATP-binding positions include 73 to 74 and 103 to 106; these read RF and GDGS. Asp104 is a Mg(2+) binding site. 126–128 is a binding site for substrate; sequence TID. Asp128 functions as the Proton acceptor in the catalytic mechanism. Arg155 contributes to the ADP binding site. Substrate-binding positions include Arg163 and 170 to 172; that span reads MGR. ADP-binding positions include 186 to 188, Lys212, and 214 to 216; these read GCE and KKH. Substrate is bound by residues Glu223, Arg244, and 250-253; that span reads HIQR.

It belongs to the phosphofructokinase type A (PFKA) family. ATP-dependent PFK group I subfamily. Prokaryotic clade 'B1' sub-subfamily. As to quaternary structure, homotetramer. Requires Mg(2+) as cofactor.

The protein localises to the cytoplasm. It carries out the reaction beta-D-fructose 6-phosphate + ATP = beta-D-fructose 1,6-bisphosphate + ADP + H(+). Its pathway is carbohydrate degradation; glycolysis; D-glyceraldehyde 3-phosphate and glycerone phosphate from D-glucose: step 3/4. Allosterically activated by ADP and other diphosphonucleosides, and allosterically inhibited by phosphoenolpyruvate. Its function is as follows. Catalyzes the phosphorylation of D-fructose 6-phosphate to fructose 1,6-bisphosphate by ATP, the first committing step of glycolysis. The polypeptide is ATP-dependent 6-phosphofructokinase (Vibrio campbellii (strain ATCC BAA-1116)).